Here is a 331-residue protein sequence, read N- to C-terminus: Anthranilate phosphoribosyltransferase (331 aa).

5-phospho-alpha-D-ribose 1-diphosphate contacts are provided by residues glycine 78, 81–82 (GD), threonine 86, 88–91 (NVST), 106–114 (KHGNYSVSS), and serine 118. An anthranilate-binding site is contributed by glycine 78. Serine 90 contributes to the Mg(2+) binding site. Asparagine 109 provides a ligand contact to anthranilate. Residue arginine 164 coordinates anthranilate. Residues aspartate 222 and glutamate 223 each contribute to the Mg(2+) site.

Belongs to the anthranilate phosphoribosyltransferase family. Homodimer. Requires Mg(2+) as cofactor.

The enzyme catalyses N-(5-phospho-beta-D-ribosyl)anthranilate + diphosphate = 5-phospho-alpha-D-ribose 1-diphosphate + anthranilate. The protein operates within amino-acid biosynthesis; L-tryptophan biosynthesis; L-tryptophan from chorismate: step 2/5. Its function is as follows. Catalyzes the transfer of the phosphoribosyl group of 5-phosphorylribose-1-pyrophosphate (PRPP) to anthranilate to yield N-(5'-phosphoribosyl)-anthranilate (PRA). The sequence is that of Anthranilate phosphoribosyltransferase from Haloarcula marismortui (strain ATCC 43049 / DSM 3752 / JCM 8966 / VKM B-1809) (Halobacterium marismortui).